We begin with the raw amino-acid sequence, 95 residues long: UPF0358 protein GTNG_0942 (95 aa).

Belongs to the UPF0358 family.

This is UPF0358 protein GTNG_0942 from Geobacillus thermodenitrificans (strain NG80-2).